Here is a 250-residue protein sequence, read N- to C-terminus: Cytochrome c oxidase subunit 2 (250 aa).

Topologically, residues 1-27 (MGLLFNNLIMNFDAPSPWGIYFQDSAT) are mitochondrial intermembrane. A helical membrane pass occupies residues 28 to 61 (PQMEGLVELHDNIMYYLVVILFGVGWILLSIIRN). Topologically, residues 62–77 (YISTKSPISHKYLNHG) are mitochondrial matrix. Residues 78–107 (TLIELIWTITPAVILILIAFPSFKLLYLMD) traverse the membrane as a helical segment. The Mitochondrial intermembrane segment spans residues 108 to 250 (EVSDPSMSVL…EKFLTWLEEQ (143 aa)). Cu cation is bound by residues H185, C220, E222, C224, H228, and M231. E222 contacts Mg(2+).

It belongs to the cytochrome c oxidase subunit 2 family. In terms of assembly, component of the cytochrome c oxidase (complex IV, CIV), a multisubunit enzyme composed of 11 subunits. The complex is composed of a catalytic core of 3 subunits Cox1, Cox2 and Cox3, encoded in the mitochondrial DNA, and 8 supernumerary subunits Cox4, Cox5a/Cox5, Cox6, Cox7, Cox8, Cox7a/Cox9, Cox6b/Cox12 and Cox6a/Cox13, which are encoded in the nuclear genome. The complex exists as a monomer or a dimer and forms respiratory supercomplexes (SCs) in the inner mitochondrial membrane with NADH-ubiquinone oxidoreductase (complex I, CI) and ubiquinol-cytochrome c oxidoreductase (cytochrome b-c1 complex, complex III, CIII), resulting in various different assemblies (supercomplexes I(1)IV(1), I(1)III(3)IV(2), III(2)IV(1) and III(2)IV(2) as well as larger supercomplexes of compositions like I(1)III(2)IV(5-6)). Requires Cu cation as cofactor.

Its subcellular location is the mitochondrion inner membrane. It carries out the reaction 4 Fe(II)-[cytochrome c] + O2 + 8 H(+)(in) = 4 Fe(III)-[cytochrome c] + 2 H2O + 4 H(+)(out). Component of the cytochrome c oxidase, the last enzyme in the mitochondrial electron transport chain which drives oxidative phosphorylation. The respiratory chain contains 3 multisubunit complexes succinate dehydrogenase (complex II, CII), ubiquinol-cytochrome c oxidoreductase (cytochrome b-c1 complex, complex III, CIII) and cytochrome c oxidase (complex IV, CIV), that cooperate to transfer electrons derived from NADH and succinate to molecular oxygen, creating an electrochemical gradient over the inner membrane that drives transmembrane transport and the ATP synthase. Cytochrome c oxidase is the component of the respiratory chain that catalyzes the reduction of oxygen to water. Electrons originating from reduced cytochrome c in the intermembrane space (IMS) are transferred via the dinuclear copper A center (CU(A)) of Cox2 and heme A of Cox1 to the active site in Cox1, a binuclear center (BNC) formed by heme A3 and copper B (CU(B)). The BNC reduces molecular oxygen to 2 water molecules using 4 electrons from cytochrome c in the IMS and 4 protons from the mitochondrial matrix. The sequence is that of Cytochrome c oxidase subunit 2 (cox-2) from Neurospora crassa (strain ATCC 24698 / 74-OR23-1A / CBS 708.71 / DSM 1257 / FGSC 987).